The primary structure comprises 757 residues: LPS-assembly protein LptD (757 aa).

An N-terminal signal peptide occupies residues 1 to 20 (MLQRFITSLMLLPFPGSALA).

Belongs to the LptD family. In terms of assembly, component of the lipopolysaccharide transport and assembly complex. Interacts with LptE and LptA.

The protein localises to the cell outer membrane. Together with LptE, is involved in the assembly of lipopolysaccharide (LPS) at the surface of the outer membrane. This chain is LPS-assembly protein LptD, found in Idiomarina loihiensis (strain ATCC BAA-735 / DSM 15497 / L2-TR).